We begin with the raw amino-acid sequence, 448 residues long: F-box/FBD/LRR-repeat protein At2g04230 (448 aa).

The F-box domain occupies 12–64 (EDRISDLPDALLLQILSSLPTENAIATSVLSKRWRSLWTMLPKLKFDSNFNPV). LRR repeat units follow at residues 72–98 (PTMF…HLSF), 149–176 (ILKL…YLDQ), 177–202 (VHFK…VVHR), 204–225 (SNAD…TIED), 226–251 (LRQE…NING), 271–296 (ISNV…ILHL), and 319–345 (THER…KLTD). The FBD domain maps to 359–410 (KWNPPKCAPECLLFHLETFLWIGYEWQRGDEKEVATYILENARRLKKATFST).

This is F-box/FBD/LRR-repeat protein At2g04230 from Arabidopsis thaliana (Mouse-ear cress).